Reading from the N-terminus, the 666-residue chain is Neurexin-2-beta (666 aa).

Over residues methionine 1–glycine 10 the composition is skewed to gly residues. A disordered region spans residues methionine 1–proline 30. A signal peptide spans methionine 1–glycine 50. The span at proline 21–proline 30 shows a compositional bias: pro residues. Over alanine 51 to threonine 590 the chain is Extracellular. The Laminin G-like domain occupies threonine 91–serine 299. 2 residues coordinate Ca(2+): aspartate 143 and valine 160. Asparagine 190 is a glycosylation site (N-linked (GlcNAc...) asparagine). Isoleucine 242 and asparagine 244 together coordinate Ca(2+). The interval alanine 327–asparagine 346 is disordered. The O-linked (Xyl...) (heparan sulfate) serine glycan is linked to serine 354. Disordered regions lie at residues alanine 412–proline 443 and threonine 479–valine 580. A helical membrane pass occupies residues glycine 591–methionine 611. At tyrosine 612 to valine 666 the chain is on the cytoplasmic side. A disordered region spans residues asparagine 633 to valine 666.

The protein belongs to the neurexin family. In terms of assembly, interacts (via cytoplasmic C-terminal region) with CASK. Specific isoforms bind alpha-dystroglycan and neuroligins NLGN1, NLGN2 and NLGN3. Interacts with CBLN1, CBLN2 and, less avidly, with CBLN4. Interacts with CLSTN3. In terms of processing, O-glycosylated; contains heparan sulfate. Heparan sulfate attachment is required for synapse development by mediating interactions with neuroligins.

The protein localises to the presynaptic cell membrane. In terms of biological role, neuronal cell surface protein that may be involved in cell recognition and cell adhesion. The chain is Neurexin-2-beta (NRXN2) from Homo sapiens (Human).